The primary structure comprises 314 residues: UDP-3-O-acyl-N-acetylglucosamine deacetylase (314 aa).

Zn(2+)-binding residues include His82, His239, and Asp243. Catalysis depends on His266, which acts as the Proton donor.

Belongs to the LpxC family. It depends on Zn(2+) as a cofactor.

The enzyme catalyses a UDP-3-O-[(3R)-3-hydroxyacyl]-N-acetyl-alpha-D-glucosamine + H2O = a UDP-3-O-[(3R)-3-hydroxyacyl]-alpha-D-glucosamine + acetate. Its pathway is glycolipid biosynthesis; lipid IV(A) biosynthesis; lipid IV(A) from (3R)-3-hydroxytetradecanoyl-[acyl-carrier-protein] and UDP-N-acetyl-alpha-D-glucosamine: step 2/6. In terms of biological role, catalyzes the hydrolysis of UDP-3-O-myristoyl-N-acetylglucosamine to form UDP-3-O-myristoylglucosamine and acetate, the committed step in lipid A biosynthesis. The chain is UDP-3-O-acyl-N-acetylglucosamine deacetylase from Myxococcus xanthus (strain DK1622).